The primary structure comprises 178 residues: Caveolin-1 (178 aa).

S2 bears the N-acetylserine mark. At S2 the chain carries Phosphoserine. Residues 2-94 (SGGKYVDSEG…WKASFTTFTV (93 aa)) form a required for homooligomerization region. Residues 2 to 104 (SGGKYVDSEG…TKYWFYRLLS (103 aa)) are Cytoplasmic-facing. Position 5 is an N6-acetyllysine; alternate (K5). K5 participates in a covalent cross-link: Glycyl lysine isopeptide (Lys-Gly) (interchain with G-Cter in ubiquitin); alternate. At Y6 the chain carries Phosphotyrosine. S9 carries the post-translational modification Phosphoserine. Y14 bears the Phosphotyrosine; by ABL1 mark. A Phosphotyrosine modification is found at Y25. Glycyl lysine isopeptide (Lys-Gly) (interchain with G-Cter in ubiquitin) cross-links involve residues K26, K30, K39, K47, and K57. Residues 82–94 (DGIWKASFTTFTV) form an interaction with CAVIN3 region. The helical intramembrane region spans 105-125 (AVFGIPMALIWGIYFAIVSFL). The Cytoplasmic segment spans residues 126–178 (HIWVVVPYIKSFLIEIQCISRVYSIYIHTFCDPLFEAFGKVFSNIRINTQKEI). An interacts with SPRY1, SPRY2, SPRY3 and SPRY4 region spans residues 131–142 (VPYIKSFLIEIQ). Residues C143 and C156 are each lipidated (S-palmitoyl cysteine). The interval 149-160 (SIYIHTFCDPLF) is interacts with SPRY1, SPRY2, and SPRY4. The tract at residues 167–178 (FSNIRINTQKEI) is interacts with SPRY1, SPRY2, SPRY3 and SPRY4.

This sequence belongs to the caveolin family. As to quaternary structure, homooligomer. Interacts (via the N-terminus) with DPP4; the interaction is direct. Forms a stable heterooligomeric complex with CAV2 that targets to lipid rafts and drives caveolae formation. Interacts with PACSIN2; this interaction induces membrane tubulation. Interacts with BMX, BTK, CTNNB1, CDH1, GLIPR2, JUP, NOSTRIN, SNAP25 and STX1A. Interacts with SLC7A9. Interacts with TGFBR1. Interacts with CAVIN3 (via leucine-zipper domain) in a cholesterol-sensitive manner. Interacts with CAVIN1. Interacts with EHD2 in a cholesterol-dependent manner. Forms a ternary complex with UBXN6 and VCP; mediates CAV1 targeting to lysosomes for degradation. Interacts with ABCG1; this interaction regulates ABCG1-mediated cholesterol efflux. Interacts with NEU3; this interaction enhances NEU3 sialidase activity within caveola. Interacts (via C-terminus) with SPRY1, SPRY2 (via C-terminus), SPRY3, and SPRY4. In terms of processing, phosphorylated at Tyr-14 by ABL1 in response to oxidative stress. Ubiquitinated. Undergo monoubiquitination and multi- and/or polyubiquitination. Monoubiquitination of N-terminal lysines promotes integration in a ternary complex with UBXN6 and VCP which promotes oligomeric CAV1 targeting to lysosomes for degradation. Ubiquitinated by ZNRF1; leading to degradation and modulation of the TLR4-mediated immune response.

It is found in the golgi apparatus membrane. It localises to the cell membrane. The protein localises to the membrane. The protein resides in the caveola. Its subcellular location is the membrane raft. In terms of biological role, may act as a scaffolding protein within caveolar membranes. Forms a stable heterooligomeric complex with CAV2 that targets to lipid rafts and drives caveolae formation. Mediates the recruitment of CAVIN proteins (CAVIN1/2/3/4) to the caveolae. Interacts directly with G-protein alpha subunits and can functionally regulate their activity. Involved in the costimulatory signal essential for T-cell receptor (TCR)-mediated T-cell activation. Its binding to DPP4 induces T-cell proliferation and NF-kappa-B activation in a T-cell receptor/CD3-dependent manner. Recruits CTNNB1 to caveolar membranes and may regulate CTNNB1-mediated signaling through the Wnt pathway. Negatively regulates TGFB1-mediated activation of SMAD2/3 by mediating the internalization of TGFBR1 from membrane rafts leading to its subsequent degradation. Binds 20(S)-hydroxycholesterol (20(S)-OHC). This Rhinolophus ferrumequinum (Greater horseshoe bat) protein is Caveolin-1 (CAV1).